A 93-amino-acid polypeptide reads, in one-letter code: Small ribosomal subunit protein uS19 (93 aa).

This sequence belongs to the universal ribosomal protein uS19 family.

Its function is as follows. Protein S19 forms a complex with S13 that binds strongly to the 16S ribosomal RNA. The sequence is that of Small ribosomal subunit protein uS19 from Leptospira interrogans serogroup Icterohaemorrhagiae serovar copenhageni (strain Fiocruz L1-130).